The following is a 433-amino-acid chain: Pyrimidine-nucleoside phosphorylase (433 aa).

81 to 83 (KHS) contacts phosphate. K(+) contacts are provided by Gly88 and Thr90. Residues Thr92, 108–110 (KMS), and Thr120 contribute to the phosphate site. Residues Arg168 and Lys187 each contribute to the substrate site. The K(+) site is built by Leu243, Ala246, and Glu255.

It belongs to the thymidine/pyrimidine-nucleoside phosphorylase family. As to quaternary structure, homodimer. K(+) is required as a cofactor.

It catalyses the reaction uridine + phosphate = alpha-D-ribose 1-phosphate + uracil. The enzyme catalyses thymidine + phosphate = 2-deoxy-alpha-D-ribose 1-phosphate + thymine. The catalysed reaction is 2'-deoxyuridine + phosphate = 2-deoxy-alpha-D-ribose 1-phosphate + uracil. In terms of biological role, catalyzes phosphorolysis of the pyrimidine nucleosides uridine, thymidine and 2'-deoxyuridine with the formation of the corresponding pyrimidine base and ribose-1-phosphate. This is Pyrimidine-nucleoside phosphorylase (pdp) from Staphylococcus aureus (strain bovine RF122 / ET3-1).